The sequence spans 286 residues: MNLKQKWDVYSRLTRLDRPIGTLLLLWPCLMALVLAAGGMPDIKVLIIFIIGVVIMRACGCIINDYADRDLDSHVERTKSRPLASGEISTKEALLLFVILGLAAFGLVLLLNGLVVKLSVVGIILTIIYPFTKRVTNMPQMFLGVVWSWSIPMAYAAQTGEVPIEAWWLFAANWFWTVAYDTMYAMVDRDDDLKVGIKSTAILFGKYDRQIIGLFQLAALLCFIAAGWSADRGLLYGLGLLTFVGFSTYQQMLIFGRERAPCFKAFLNNNWAGLALFVGLGADYLF.

The next 7 membrane-spanning stretches (helical) occupy residues 21 to 40 (GTLL…AGGM), 96 to 116 (LFVI…GLVV), 142 to 162 (FLGV…TGEV), 167 to 187 (WWLF…YAMV), 210 to 230 (QIIG…GWSA), 235 to 255 (LYGL…MLIF), and 266 to 286 (FLNN…DYLF).

This sequence belongs to the UbiA prenyltransferase family. Mg(2+) serves as cofactor.

The protein localises to the cell inner membrane. It catalyses the reaction all-trans-octaprenyl diphosphate + 4-hydroxybenzoate = 4-hydroxy-3-(all-trans-octaprenyl)benzoate + diphosphate. It functions in the pathway cofactor biosynthesis; ubiquinone biosynthesis. Catalyzes the prenylation of para-hydroxybenzoate (PHB) with an all-trans polyprenyl group. Mediates the second step in the final reaction sequence of ubiquinone-8 (UQ-8) biosynthesis, which is the condensation of the polyisoprenoid side chain with PHB, generating the first membrane-bound Q intermediate 3-octaprenyl-4-hydroxybenzoate. The protein is 4-hydroxybenzoate octaprenyltransferase of Shewanella sp. (strain ANA-3).